A 203-amino-acid chain; its full sequence is Outer-membrane lipoprotein carrier protein (203 aa).

The N-terminal stretch at 1–21 (MKKWLAISCLIAGVTSTAVYA) is a signal peptide.

The protein belongs to the LolA family. As to quaternary structure, monomer.

It localises to the periplasm. Participates in the translocation of lipoproteins from the inner membrane to the outer membrane. Only forms a complex with a lipoprotein if the residue after the N-terminal Cys is not an aspartate (The Asp acts as a targeting signal to indicate that the lipoprotein should stay in the inner membrane). The sequence is that of Outer-membrane lipoprotein carrier protein from Pectobacterium atrosepticum (strain SCRI 1043 / ATCC BAA-672) (Erwinia carotovora subsp. atroseptica).